Consider the following 699-residue polypeptide: Nucleolar and coiled-body phosphoprotein 1 (699 aa).

Residues 10 to 42 (VPSDLYPLVLGFLRDNQLSEVANKFAKATGATQ) form the LisH domain. K33 bears the N6-acetyllysine mark. The interval 65–637 (ERKLQANGPV…VREEEIEVDS (573 aa)) is disordered. Residues K67 and K76 each participate in a glycyl lysine isopeptide (Lys-Gly) (interchain with G-Cter in SUMO2) cross-link. The Acidic serine cluster 1 repeat unit spans residues 84–95 (SSDSEDSSEEEE). An 11 X 12 AA approximate repeats of an acidic serine cluster region spans residues 84 to 566 (SSDSEDSSEE…GKAAKNSEEE (483 aa)). Positions 86–97 (DSEDSSEEEEEV) are enriched in acidic residues. 3 positions are modified to phosphoserine: S87, S90, and S91. S91 bears the Diphosphoserine mark. Low complexity predominate over residues 100–110 (PPAKKAAVPAK). The stretch at 125-136 (ESSSSEESSDDD) is one Acidic serine cluster 2 repeat. The span at 144 to 159 (QPVQKGVKPQAKAAKA) shows a compositional bias: low complexity. The stretch at 167–178 (SDSDSDSSSEDE) is one Acidic serine cluster 3 repeat. Residue K186 forms a Glycyl lysine isopeptide (Lys-Gly) (interchain with G-Cter in SUMO2) linkage. T188 is subject to Phosphothreonine. K193 is covalently cross-linked (Glycyl lysine isopeptide (Lys-Gly) (interchain with G-Cter in SUMO2)). Low complexity-rich tracts occupy residues 193–227 (KAQT…SSSS) and 236–261 (AATP…TTPT). The segment at 204 to 382 (RAAPKIANGK…DDEAPSKPAG (179 aa)) is interaction with RPA194. One copy of the Acidic serine cluster 4 repeat lies at 221-232 (SSSSSSSDDSEE). The Acidic serine cluster 5 repeat unit spans residues 264–275 (SSSSEDSSSDEE). A compositionally biased stretch (pro residues) spans 291–301 (SVPPPSAPPPK). A compositionally biased stretch (acidic residues) spans 321 to 333 (SSEDSSDESDSSS). The stretch at 325-336 (SSDESDSSSEEE) is one Acidic serine cluster 6 repeat. Residues K342 and K347 each participate in a glycyl lysine isopeptide (Lys-Gly) (interchain with G-Cter in SUMO2) cross-link. Phosphoserine occurs at positions 362, 363, and 366. The stretch at 363-375 (SDSSDSDSSEDDE) is one Acidic serine cluster 7 repeat. Acidic residues predominate over residues 366 to 375 (SDSDSSEDDE). Residues 381–397 (AGTTKNSSNKPAVTTKS) are compositionally biased toward polar residues. Glycyl lysine isopeptide (Lys-Gly) (interchain with G-Cter in SUMO2) cross-links involve residues K390 and K396. At S397 the chain carries Phosphoserine. A compositionally biased stretch (low complexity) spans 398–409 (PAVKPAAAPKQP). Glycyl lysine isopeptide (Lys-Gly) (interchain with G-Cter in SUMO2) cross-links involve residues K401 and K407. K415 is modified (N6-acetyllysine; alternate). K415 is covalently cross-linked (Glycyl lysine isopeptide (Lys-Gly) (interchain with G-Cter in SUMO1); alternate). A Glycyl lysine isopeptide (Lys-Gly) (interchain with G-Cter in SUMO2); alternate cross-link involves residue K415. Residues 425–436 (SSEEESSSSEEE) form an Acidic serine cluster 8 repeat. Glycyl lysine isopeptide (Lys-Gly) (interchain with G-Cter in SUMO2) cross-links involve residues K440 and K452. Low complexity-rich tracts occupy residues 441-476 (MVAT…SDSS) and 498-523 (AGGA…SSSD). The residue at position 456 (S456) is a Phosphoserine. One copy of the Acidic serine cluster 9 repeat lies at 470 to 481 (SSDSDSSSSEEE). A Glycyl lysine isopeptide (Lys-Gly) (interchain with G-Cter in SUMO2) cross-link involves residue K505. S508 carries the phosphoserine modification. The Acidic serine cluster 10 repeat unit spans residues 519–529 (SSSSDDSSEEE). Position 538 is a phosphoserine (S538). Residues 547–556 (NGTSALTAQN) show a composition bias toward polar residues. One copy of the Acidic serine cluster 11 repeat lies at 555–566 (QNGKAAKNSEEE). S563 is modified (phosphoserine). A Glycyl lysine isopeptide (Lys-Gly) (interchain with G-Cter in SUMO1) cross-link involves residue K572. K579 participates in a covalent cross-link: Glycyl lysine isopeptide (Lys-Gly) (interchain with G-Cter in SUMO2). A phosphoserine mark is found at S580 and S582. K604 is covalently cross-linked (Glycyl lysine isopeptide (Lys-Gly) (interchain with G-Cter in SUMO2)). Phosphothreonine is present on residues T607 and T610. A Glycyl lysine isopeptide (Lys-Gly) (interchain with G-Cter in SUMO2) cross-link involves residue K613. S622 is subject to Phosphoserine. A compositionally biased stretch (basic and acidic residues) spans 627–637 (RVREEEIEVDS). S643 bears the Phosphoserine mark. K647 participates in a covalent cross-link: Glycyl lysine isopeptide (Lys-Gly) (interchain with G-Cter in SUMO2). K663 bears the N6-acetyllysine; alternate mark. Residue K663 forms a Glycyl lysine isopeptide (Lys-Gly) (interchain with G-Cter in SUMO2); alternate linkage. Position 683 is an omega-N-methylarginine (R683). S686 carries the post-translational modification Phosphoserine. A Glycyl lysine isopeptide (Lys-Gly) (interchain with G-Cter in SUMO2) cross-link involves residue K695. A Phosphoserine modification is found at S698.

This sequence belongs to the NOLC1 family. As to quaternary structure, heterodimer; heterodimerizes with TCOF1 following monoubiquitination. Interacts with RNA polymerase I 194 kDa subunit (RPA194) and with casein kinase-II. Interacts with DKC1/NAP57, NOP58 and fibrillarin. Post-translationally, undergoes rapid and massive phosphorylation/dephosphorylation cycles on CK2 and PKC sites. NOLC1 is one of the mostly phosphorylated proteins in the cell. Ubiquitinated. Monoubiquitination by the BCR(KBTBD8) complex promotes the formation of a NOLC1-TCOF1 complex that acts as a platform to connect RNA polymerase I with enzymes responsible for ribosomal processing and modification, leading to remodel the translational program of differentiating cells in favor of neural crest specification. In terms of processing, pyrophosphorylated by 5-diphosphoinositol pentakisphosphate (5-IP7). Serine pyrophosphorylation is achieved by Mg(2+)-dependent, but enzyme independent transfer of a beta-phosphate from a inositol pyrophosphate to a pre-phosphorylated serine residue.

The protein localises to the nucleus. It localises to the nucleolus. It is found in the cytoplasm. Nucleolar protein that acts as a regulator of RNA polymerase I by connecting RNA polymerase I with enzymes responsible for ribosomal processing and modification. Required for neural crest specification: following monoubiquitination by the BCR(KBTBD8) complex, associates with TCOF1 and acts as a platform to connect RNA polymerase I with enzymes responsible for ribosomal processing and modification, leading to remodel the translational program of differentiating cells in favor of neural crest specification. Involved in nucleologenesis, possibly by playing a role in the maintenance of the fundamental structure of the fibrillar center and dense fibrillar component in the nucleolus. It has intrinsic GTPase and ATPase activities. In Homo sapiens (Human), this protein is Nucleolar and coiled-body phosphoprotein 1.